A 621-amino-acid polypeptide reads, in one-letter code: tRNA uridine 5-carboxymethylaminomethyl modification enzyme MnmG (621 aa).

8-13 is an FAD binding site; it reads GAGHAG. 269–283 is a binding site for NAD(+); sequence GPRYCPSIEDKIHRF.

This sequence belongs to the MnmG family. Homodimer. Heterotetramer of two MnmE and two MnmG subunits. It depends on FAD as a cofactor.

It is found in the cytoplasm. In terms of biological role, NAD-binding protein involved in the addition of a carboxymethylaminomethyl (cmnm) group at the wobble position (U34) of certain tRNAs, forming tRNA-cmnm(5)s(2)U34. This is tRNA uridine 5-carboxymethylaminomethyl modification enzyme MnmG from Chlorobium phaeovibrioides (strain DSM 265 / 1930) (Prosthecochloris vibrioformis (strain DSM 265)).